The sequence spans 87 residues: Neurotoxin LmNaTx64.1 (87 aa).

Residues 1–18 (MKILFLIILTAFFIGVHC) form the signal peptide. An LCN-type CS-alpha/beta domain is found at 19–85 (KHGYPIIRAG…TWSRATNKCK (67 aa)). Intrachain disulfides connect C33–C84, C37–C58, C44–C65, and C48–C67. The residue at position 84 (C84) is a Cysteine amide.

Belongs to the long (4 C-C) scorpion toxin superfamily. Sodium channel inhibitor family. Beta subfamily. Expressed by the venom gland.

It localises to the secreted. Functionally, binds voltage-independently at site-4 of sodium channels (Nav) and shift the voltage of activation toward more negative potentials thereby affecting sodium channel activation and promoting spontaneous and repetitive firing. The chain is Neurotoxin LmNaTx64.1 from Lychas mucronatus (Chinese swimming scorpion).